Consider the following 1507-residue polypeptide: MYNPPPGGGGGNNGGDQSQQQPTNNATLFLLQMIQQSQHQQQHQNQQQQQLELQIRDQERILIEQQRMQHQQQQNQLLQGLNQFPFNPLGLFQVQAAVQAAQAQFAQNAQGSPIPFHIGSPLQPSHSPAASALQQQYLLPSHSPAITPFARNSEAARNIEQFIAQEEAANVPRANSQQQSPLIRPIPQQQALNIQNLTSTQQAQQILAHHRQVPVQQVQHQQHIPTPPLALPIAQQGPISNEVPSVPPVVPATSAGCPQREPRQQQGGRRQNRPGRRKKPEGPPRVDEALAYLRVIKSTFSSDVPVYHRFLEIMKDFRAQRIETPDVIEQVAELLYDSPELVLGFNTFLPTGYRITLTPDRKYVFSSPQMQPRVLLSPDERRARAIEAGAQAVGAIELGSQEGISKDEDRTIEDEDMDKSKEKDDVDGIDDEDDEESGIEDKNNEEMMEEDNHLIEEIICDDRKKDDCEDSQQEIEMSSELAAHTLNIIELLKKSFLARPTKLVDFMTFIDFFMSDQQYKKDMEKLRKDDEDDEIEENEKIEVDDVPGPSNAPQEIKKPDDIEKKDSSKNLQIEESCSDYLVSMLANCCIGEPDLLAATIDFLPYLGKLLVNGSDAIALKIKTILHFSATNDRNDIPPVNRVNPSDVDMDLVKQMEKCKMGTKKNEKLKLKVAGQGDEGATVELMILKKSYRILYERLKSRTTPNQLSHLMVLINAYANLDITREQLISELPKIMGTSGSDLEMIILQLLGAEKEPKNRPENDMDAVMRKDLPAIQPKRGLRDQKMLQQVKNVEAATVCTLGPSYRFMKDTKATDCSGRVELDDDLKGVLNDTWTSIPSWSSEDTGSQAIKKSNLEEFHFKTEDERYELDIIVDSNRTVIEQLSKTLRDYEAMSDEDKKSFKLDKWLNASSRSTTIRVLAKVFTNSAQDFIDAAQKNPLVGLRRILESLKEKDLLWSRFQQDTNRTWRDALDKQMSAATTILNNQHKNYDQKAFKSKPLVNQIEQICEERRKNNSTDTSPHLILEYTPERKVYRDVNDVTGHFFHDLSGTKCDRDRTKIVLFSYRILMEWLCQEGQQVQIDLDNGEIFKFQGDLNEDENLMTLLNMDGRRICGDRVVPVSTSLESNESSIDHFSENLHQKRTRRTFYGDDSVYMIIRYHHMIQERFAKILSTQAIYAQEHFDNQKKNKRWEDGIGADMHGRKALQENIKQRRAAVNDIRNVRSCPSSSYETTLRELKQLGNAQMDIVAFEEAVKNLFPGDIVLFNNIDKLFSSLAKNIHHATCAEERENPIKLYLKYRQRIMNAERDEDMESVIQEYGQTAEEVLRGKNTYRFEFVEEQNKPFIKIWVIPREEKDDDDDDDEEGNEGGKDEDNVKDEDDGGDGEGRDGPDDDQPPPSNDDGDDEEDEDDEEDGPSGADEPESTSGSGNVPMDHLNIGENFLWSPPEEKVCTGKMTTNEKEQRNSVDYMKVTTTPRLRIHKRMLKEHKGCNVELMTGFQQLSAIVPLM.

Disordered regions lie at residues 1–26 (MYNP…TNNA), 228–286 (PLAL…PPRV), 397–450 (ELGS…MMEE), 543–569 (VDDV…DSSK), and 1349–1434 (IPRE…MDHL). A compositionally biased stretch (polar residues) spans 16–26 (DQSQQQPTNNA). Positions 270–279 (RQNRPGRRKK) are enriched in basic residues. The PAH domain maps to 282-352 (GPPRVDEALA…LGFNTFLPTG (71 aa)). The span at 427–438 (DGIDDEDDEESG) shows a compositional bias: acidic residues. Composition is skewed to basic and acidic residues over residues 439 to 450 (IEDKNNEEMMEE) and 555 to 568 (EIKK…KDSS). 3 stretches are compositionally biased toward acidic residues: residues 1354 to 1365 (KDDDDDDDEEGN), 1373 to 1382 (NVKDEDDGGD), and 1389 to 1421 (PDDD…DEPE).

As to quaternary structure, component of the SIN3S complex, which contains at least sin-3, hda-1, athp-1 and mrg-1. Interacts with ztf-11; the interaction is weak. Interacts with cfp-1. Expressed in all ray structural cells including ray 6, 7, 8 and 9 of the male tail. Also expressed in the inner labial neurons, socket cells, the cephalic neurons in the head and the ventral nerve cord.

It localises to the nucleus. Its function is as follows. Probable transcriptional repressor required for the deposition of dimethylated 'Lys-9' of histone H3 (H3K9me2) on asynapsed chromosome pairs (both autosomes and sex chromosomes) during meiosis, but this does not seem to solely affect the transcriptional status. Plays a role in ray fusion and patterning in the male tail, and this may be through activity of the histone deacetylase complex (HDAC). The sequence is that of Paired amphipathic helix protein sin-3 from Caenorhabditis elegans.